Reading from the N-terminus, the 418-residue chain is Pentatricopeptide repeat-containing protein At2g18520, mitochondrial (418 aa).

A mitochondrion-targeting transit peptide spans 1–14 (MTSSRLYLRFLRRF). 8 PPR repeats span residues 101–135 (TETFLSTLIRSYGRASMFDHAMKMFEEMDKLGTPR), 136–166 (TVVSFNALLAACLHSDLFERVPQLFDEFPQR), 173–207 (DKISYGMLIKSYCDSGKPEKAMEIMRDMEVKGVEV), 208–242 (TIIAFTTILGSLYKNGLVDEAESLWIEMVNKGCDL), 243–276 (DNTVYNVRLMNAAKESPERVKELMEEMSSVGLKP), 277–311 (DTVSYNYLMTAYCVKGMMSEAKKVYEGLEQPNAAT), 312–342 (FRTLIFHLCINGLYDQGLTVFKKSAIVHKIP), and 343–373 (DFKTCKHLTEGLVKNNRMEDARGVARIVKKK).

This sequence belongs to the PPR family. P subfamily.

The protein resides in the mitochondrion. The protein is Pentatricopeptide repeat-containing protein At2g18520, mitochondrial of Arabidopsis thaliana (Mouse-ear cress).